A 1010-amino-acid polypeptide reads, in one-letter code: Retinoblastoma-related protein 3 (1010 aa).

Residues 416 to 616 form a domain A region; it reads TPVSTAMTTA…EKGSSMYNSL (201 aa). The segment at 416-858 is pocket; that stretch reads TPVSTAMTTA…NEVFIPAVKS (443 aa). The spacer stretch occupies residues 617 to 727; the sequence is IVARPALSVE…PAAGGETCAE (111 aa). The segment at 728–858 is domain B; that stretch reads TGIGVFFSKI…NEVFIPAVKS (131 aa). Disordered regions lie at residues 867-889 and 986-1010; these read ASAS…FPES and GSDR…PSDS.

This sequence belongs to the retinoblastoma protein (RB) family.

It is found in the nucleus. Regulator of biological processes that recruits a histone deacetylase to control gene transcription. May play a role in the entry into mitosis, negatively regulating the cell proliferation. Formation of stable complexes with geminiviridae replication-associated proteins may create a cellular environment which favors viral DNA replication. This is Retinoblastoma-related protein 3 (RBR3) from Zea mays (Maize).